A 138-amino-acid polypeptide reads, in one-letter code: Drosulfakinins (138 aa).

The N-terminal stretch at 1–33 is a signal peptide; it reads MGLRSCTHFATLVMPLWALAFCFLVLVPVPAQT. Positions 34-73 are excised as a propeptide; sequence TSLQISKGDRRLQDLESNMGAESDQPNANLVGTSLSRFGD. Phenylalanine 82 is modified (phenylalanine amide). A propeptide spanning residues 86-108 is cleaved from the precursor; it reads VPRPIIPIELDLLMDNDDENTKA. A Sulfotyrosine modification is found at tyrosine 114. The residue at position 119 (phenylalanine 119) is a Phenylalanine amide. Tyrosine 131 bears the Sulfotyrosine mark. The residue at position 136 (phenylalanine 136) is a Phenylalanine amide.

The protein belongs to the gastrin/cholecystokinin family.

It is found in the secreted. Its function is as follows. Drosulfakinin-0 (DSK 0) plays diverse biological roles including regulating gut muscle contraction in adults but not in larvae. In Drosophila teissieri (Fruit fly), this protein is Drosulfakinins.